Here is a 504-residue protein sequence, read N- to C-terminus: UDP-N-acetylmuramoylalanine--D-glutamate ligase (504 aa).

129-135 contributes to the ATP binding site; that stretch reads GTNGKTT.

This sequence belongs to the MurCDEF family.

The protein localises to the cytoplasm. It catalyses the reaction UDP-N-acetyl-alpha-D-muramoyl-L-alanine + D-glutamate + ATP = UDP-N-acetyl-alpha-D-muramoyl-L-alanyl-D-glutamate + ADP + phosphate + H(+). It functions in the pathway cell wall biogenesis; peptidoglycan biosynthesis. In terms of biological role, cell wall formation. Catalyzes the addition of glutamate to the nucleotide precursor UDP-N-acetylmuramoyl-L-alanine (UMA). The sequence is that of UDP-N-acetylmuramoylalanine--D-glutamate ligase from Burkholderia mallei (strain ATCC 23344).